Consider the following 356-residue polypeptide: MQPSTLQTLTKKALATQHVSKDDYYILERCGLWWHEAPISMYIDDDNQIIIKTLCYKEGIKLNTALVLAVKENNDDLIMLFTEWGANINYGLLFINNEHTRNLCRKLGAKEELETSEILRFFFETKHKITSSNIILCHELFSNNPFLQNVNMVDLRTIIYWELKDLTTNSMLNEIPFSEMLTKYWYGIAVKYNLKEAIQYFCQEYRHFDEWRLICALSFNNVFDLHEICNTTKVHMSINKMMELACMRDNNFLTIYYCFALGANVNRAMLISVKNFRIENMFFCMDLGANVIEHSKTLADIYGYSIIVNILSLKIYKANPILLSKETNPEKINTLLKNYYSKNMLAYDICCIDNYL.

One copy of the ANK repeat lies at 61 to 93 (KLNTALVLAVKENNDDLIMLFTEWGANINYGLL).

It belongs to the asfivirus MGF 360 family.

Functionally, plays a role in virus cell tropism, and may be required for efficient virus replication in macrophages. The polypeptide is Protein MGF 360-3L (Ornithodoros (relapsing fever ticks)).